Here is a 144-residue protein sequence, read N- to C-terminus: Large ribosomal subunit protein uL24 (144 aa).

The disordered stretch occupies residues 102–144; sequence NIVVEKPEPEPEPRKEETAEAQEAKEEAVAEEKTEVDDNDKQN. Over residues 103–134 the composition is skewed to basic and acidic residues; sequence IVVEKPEPEPEPRKEETAEAQEAKEEAVAEEK. Over residues 135–144 the composition is skewed to acidic residues; that stretch reads TEVDDNDKQN.

It belongs to the universal ribosomal protein uL24 family. Part of the 50S ribosomal subunit.

Its function is as follows. One of two assembly initiator proteins, it binds directly to the 5'-end of the 23S rRNA, where it nucleates assembly of the 50S subunit. Functionally, located at the polypeptide exit tunnel on the outside of the subunit. The protein is Large ribosomal subunit protein uL24 (rpl24) of Thermoplasma acidophilum (strain ATCC 25905 / DSM 1728 / JCM 9062 / NBRC 15155 / AMRC-C165).